The following is a 328-amino-acid chain: Probable voltage-gated potassium channel subunit beta (328 aa).

Trp-21, Gln-27, and Asp-49 together coordinate NADP(+). The Proton donor/acceptor role is filled by Tyr-54. NADP(+)-binding residues include Ser-152, Gln-178, Trp-207, Ser-208, Pro-209, Leu-210, Ala-211, Lys-218, Arg-229, Gly-285, Thr-287, Gln-291, Glu-294, and Asn-295.

The protein belongs to the shaker potassium channel beta subunit family. As to quaternary structure, forms heteromultimeric complexes with potassium channel alpha subunits. As to expression, expressed in roots, leaves and flowers (at protein level).

In terms of biological role, probable accessory potassium channel protein which modulates the activity of the pore-forming alpha subunit. The polypeptide is Probable voltage-gated potassium channel subunit beta (KAB1) (Arabidopsis thaliana (Mouse-ear cress)).